A 371-amino-acid chain; its full sequence is MIPPCDPIILENNPQFRKLYQHLTTNLLNADGSTRANDEQPARKAVLEELRGCRVRSANKKIKQQILQQLAFDADSGLPDDYRDPLAVITLYLESSPSRLDLEDGDDHRSSHDQALSLLASDIDAFYSIIPALVIPFSNALSSALEDLRAIANAGKSLDCAASAPAIPHTSTLPTRTRIRTSRNQFKAKSQAPLASQLRERLQKLRQIQLAQIPAARARMAITAAKVLETRAEILKHTVVLLERVKHGALSRATKSKAEHLALVAQGVEAKLRIIKLDTAAILYTPEVVTALDRYRQHLRETRERLEEKQGKLLEELKGYESMDSTETHELSARSSKEHFESGPMREIARRYGSLVKEIEAVKLEIQRISG.

Residues 287–323 (EVVTALDRYRQHLRETRERLEEKQGKLLEELKGYESM) adopt a coiled-coil conformation.

This is an uncharacterized protein from Aspergillus fumigatus (strain ATCC MYA-4609 / CBS 101355 / FGSC A1100 / Af293) (Neosartorya fumigata).